The sequence spans 92 residues: uncharacterized protein (92 aa).

2 consecutive transmembrane segments (helical) span residues 34-54 and 65-85; these read GLGIAVIIFCVCIIAFMFMFG and LLYIVVGGVLLWGAGTFASTV.

The protein resides in the cell membrane. This is an uncharacterized protein from Bacillus anthracis.